The primary structure comprises 215 residues: Elongation factor Ts (215 aa).

The interval 80-83 (TDFV) is involved in Mg(2+) ion dislocation from EF-Tu.

The protein belongs to the EF-Ts family.

The protein resides in the cytoplasm. Its function is as follows. Associates with the EF-Tu.GDP complex and induces the exchange of GDP to GTP. It remains bound to the aminoacyl-tRNA.EF-Tu.GTP complex up to the GTP hydrolysis stage on the ribosome. This is Elongation factor Ts from Heliobacterium modesticaldum (strain ATCC 51547 / Ice1).